The following is a 109-amino-acid chain: Cytochrome bo(3) ubiquinol oxidase subunit 4 (109 aa).

The Cytoplasmic segment spans residues 1–17; sequence MSHSTDHSGASHGSVKT. A helical transmembrane segment spans residues 18-36; it reads YMTGFILSIILTVIPFWMV. Residues 37-45 lie on the Periplasmic side of the membrane; that stretch reads MTGAASPAV. A helical membrane pass occupies residues 46-64; it reads ILGTILAMAVVQVLVHLVC. Residues 65–80 lie on the Cytoplasmic side of the membrane; sequence FLHMNTKSDEGWNMTA. Residues 81–99 traverse the membrane as a helical segment; sequence FVFTVLIIAILVVGSIWIM. The Periplasmic portion of the chain corresponds to 100–109; that stretch reads WNLNYNMMMH.

This sequence belongs to the cytochrome c oxidase bacterial subunit 4 family. As to quaternary structure, heterooctamer of two A chains, two B chains, two C chains and two D chains.

The protein localises to the cell inner membrane. Its function is as follows. Cytochrome bo(3) ubiquinol terminal oxidase is the component of the aerobic respiratory chain of E.coli that predominates when cells are grown at high aeration. Has proton pump activity across the membrane in addition to electron transfer, pumping 2 protons/electron. The protein is Cytochrome bo(3) ubiquinol oxidase subunit 4 (cyoD) of Escherichia coli O157:H7.